The sequence spans 474 residues: Kynureninase 2 (474 aa).

Pyridoxal 5'-phosphate is bound by residues Leu-144, Thr-145, 172 to 175 (FPSD), Asp-258, His-261, and Tyr-283. Residue Lys-284 is modified to N6-(pyridoxal phosphate)lysine. Pyridoxal 5'-phosphate is bound by residues Trp-323 and Thr-351.

It belongs to the kynureninase family. Homodimer. Pyridoxal 5'-phosphate is required as a cofactor.

Its subcellular location is the cytoplasm. The catalysed reaction is L-kynurenine + H2O = anthranilate + L-alanine + H(+). It carries out the reaction 3-hydroxy-L-kynurenine + H2O = 3-hydroxyanthranilate + L-alanine + H(+). The protein operates within amino-acid degradation; L-kynurenine degradation; L-alanine and anthranilate from L-kynurenine: step 1/1. It functions in the pathway cofactor biosynthesis; NAD(+) biosynthesis; quinolinate from L-kynurenine: step 2/3. Catalyzes the cleavage of L-kynurenine (L-Kyn) and L-3-hydroxykynurenine (L-3OHKyn) into anthranilic acid (AA) and 3-hydroxyanthranilic acid (3-OHAA), respectively. This chain is Kynureninase 2 (bna5-2), found in Emericella nidulans (strain FGSC A4 / ATCC 38163 / CBS 112.46 / NRRL 194 / M139) (Aspergillus nidulans).